A 315-amino-acid polypeptide reads, in one-letter code: Serine/threonine-protein phosphatase PP2A catalytic subunit 3 (315 aa).

Residues Asp-62, His-64, Asp-90, and Asn-122 each contribute to the Mn(2+) site. His-123 serves as the catalytic Proton donor. Residues His-172 and His-247 each coordinate Mn(2+). The tract at residues 294–315 (QFEPAPRENEPHTTRRVPDYFL) is disordered. Over residues 298–315 (APRENEPHTTRRVPDYFL) the composition is skewed to basic and acidic residues. Leu-315 is modified (leucine methyl ester).

The protein belongs to the PPP phosphatase family. PP-2A subfamily. Mn(2+) is required as a cofactor. Reversibly methyl esterified on Leu-315 by leucine carboxyl methyltransferase 1 (PPM1) and protein phosphatase methylesterase 1 (PPE1). Carboxyl methylation influences the affinity of the catalytic subunit for the different regulatory subunits, thereby modulating the PP2A holoenzyme's substrate specificity, enzyme activity and cellular localization.

It carries out the reaction O-phospho-L-seryl-[protein] + H2O = L-seryl-[protein] + phosphate. The catalysed reaction is O-phospho-L-threonyl-[protein] + H2O = L-threonyl-[protein] + phosphate. This chain is Serine/threonine-protein phosphatase PP2A catalytic subunit 3 (Ppn3), found in Paramecium tetraurelia.